The sequence spans 223 residues: Small ribosomal subunit protein uS3 (223 aa).

A KH type-2 domain is found at 38–106 (IRKFLDEKLK…QVHINIVEIK (69 aa)).

It belongs to the universal ribosomal protein uS3 family. In terms of assembly, part of the 30S ribosomal subunit. Forms a tight complex with proteins S10 and S14.

Binds the lower part of the 30S subunit head. Binds mRNA in the 70S ribosome, positioning it for translation. The chain is Small ribosomal subunit protein uS3 from Lactobacillus delbrueckii subsp. bulgaricus (strain ATCC 11842 / DSM 20081 / BCRC 10696 / JCM 1002 / NBRC 13953 / NCIMB 11778 / NCTC 12712 / WDCM 00102 / Lb 14).